The following is a 123-amino-acid chain: Ribosome-binding factor A (123 aa).

It belongs to the RbfA family. In terms of assembly, monomer. Binds 30S ribosomal subunits, but not 50S ribosomal subunits or 70S ribosomes.

The protein resides in the cytoplasm. Its function is as follows. One of several proteins that assist in the late maturation steps of the functional core of the 30S ribosomal subunit. Associates with free 30S ribosomal subunits (but not with 30S subunits that are part of 70S ribosomes or polysomes). Required for efficient processing of 16S rRNA. May interact with the 5'-terminal helix region of 16S rRNA. The chain is Ribosome-binding factor A from Delftia acidovorans (strain DSM 14801 / SPH-1).